Here is a 157-residue protein sequence, read N- to C-terminus: Protein Smg (157 aa).

Belongs to the Smg family.

The protein is Protein Smg of Escherichia coli O139:H28 (strain E24377A / ETEC).